The chain runs to 616 residues: Dihydroxy-acid dehydratase (616 aa).

Aspartate 81 contributes to the Mg(2+) binding site. [2Fe-2S] cluster is bound at residue cysteine 122. Mg(2+)-binding residues include aspartate 123 and lysine 124. Lysine 124 carries the N6-carboxylysine modification. Cysteine 195 is a binding site for [2Fe-2S] cluster. Mg(2+) is bound at residue glutamate 491. The active-site Proton acceptor is the serine 517.

This sequence belongs to the IlvD/Edd family. As to quaternary structure, homodimer. [2Fe-2S] cluster is required as a cofactor. Mg(2+) serves as cofactor.

It carries out the reaction (2R)-2,3-dihydroxy-3-methylbutanoate = 3-methyl-2-oxobutanoate + H2O. It catalyses the reaction (2R,3R)-2,3-dihydroxy-3-methylpentanoate = (S)-3-methyl-2-oxopentanoate + H2O. It participates in amino-acid biosynthesis; L-isoleucine biosynthesis; L-isoleucine from 2-oxobutanoate: step 3/4. Its pathway is amino-acid biosynthesis; L-valine biosynthesis; L-valine from pyruvate: step 3/4. Functionally, functions in the biosynthesis of branched-chain amino acids. Catalyzes the dehydration of (2R,3R)-2,3-dihydroxy-3-methylpentanoate (2,3-dihydroxy-3-methylvalerate) into 2-oxo-3-methylpentanoate (2-oxo-3-methylvalerate) and of (2R)-2,3-dihydroxy-3-methylbutanoate (2,3-dihydroxyisovalerate) into 2-oxo-3-methylbutanoate (2-oxoisovalerate), the penultimate precursor to L-isoleucine and L-valine, respectively. The polypeptide is Dihydroxy-acid dehydratase (Shewanella sediminis (strain HAW-EB3)).